Consider the following 185-residue polypeptide: uncharacterized protein (185 aa).

A chloroplast-targeting transit peptide spans 1–56 (MSSFTIPSPSSFSLSNSYNQTSPHSFTLRNSRSNFEFHRLRLDVESRRRSTSLRSN). The segment at 48–67 (RRSTSLRSNCSTKGTDSGEN) is disordered. Over residues 52 to 64 (SLRSNCSTKGTDS) the composition is skewed to polar residues. Residues 105–138 (QAEQQKQVQEIQEEVLERAKKAKERAARETMEEQ) are a coiled coil.

The protein resides in the plastid. Its subcellular location is the chloroplast. It localises to the plastoglobule. This is an uncharacterized protein from Arabidopsis thaliana (Mouse-ear cress).